Here is an 88-residue protein sequence, read N- to C-terminus: Class I hydrophobin F (88 aa).

An N-terminal signal peptide occupies residues 1 to 21 (MLSRLFTVPAILLATLGSAAT). 4 disulfide bridges follow: Cys30-Cys67, Cys34-Cys58, Cys35-Cys51, and Cys68-Cys84.

The protein belongs to the fungal hydrophobin family.

The protein localises to the secreted. Its subcellular location is the cell wall. It is found in the vacuole. The protein resides in the cytoplasmic vesicle. Functionally, aerial growth, conidiation, and dispersal of filamentous fungi in the environment rely upon a capability of their secreting small amphipathic proteins called hydrophobins (HPBs) with low sequence identity. Class I can self-assemble into an outermost layer of rodlet bundles on aerial cell surfaces, conferring cellular hydrophobicity that supports fungal growth, development and dispersal; whereas Class II form highly ordered films at water-air interfaces through intermolecular interactions but contribute nothing to the rodlet structure. Hyd1F contributes to certain cell wall-related features, such as hydrophobicity but is not involved in cell wall-related events during fungal proliferation in host hemocoel. Does not contribute to conidial hydrophobicity. The sequence is that of Class I hydrophobin F from Beauveria bassiana (strain ARSEF 2860) (White muscardine disease fungus).